A 677-amino-acid polypeptide reads, in one-letter code: Methionine--tRNA ligase (677 aa).

The 'HIGH' region motif lies at 15 to 25; that stretch reads PYANGSIHLGH. 4 residues coordinate Zn(2+): C146, C149, C159, and C162. The short motif at 333-337 is the 'KMSKS' region element; sequence KMSKS. K336 contributes to the ATP binding site. The tRNA-binding domain occupies 575-677; the sequence is DFAKVDLRVA…AGAKPGHQVK (103 aa).

It belongs to the class-I aminoacyl-tRNA synthetase family. MetG type 1 subfamily. As to quaternary structure, homodimer. Zn(2+) serves as cofactor.

The protein localises to the cytoplasm. The catalysed reaction is tRNA(Met) + L-methionine + ATP = L-methionyl-tRNA(Met) + AMP + diphosphate. Its function is as follows. Is required not only for elongation of protein synthesis but also for the initiation of all mRNA translation through initiator tRNA(fMet) aminoacylation. The polypeptide is Methionine--tRNA ligase (Escherichia coli (strain ATCC 8739 / DSM 1576 / NBRC 3972 / NCIMB 8545 / WDCM 00012 / Crooks)).